A 328-amino-acid chain; its full sequence is UPF0421 protein SAV1889 (328 aa).

4 helical membrane passes run 19-39 (IAIF…IYAI), 61-81 (LPAT…FGDQ), 108-128 (VAVL…IFNF), and 132-152 (TLTA…VFPP).

The protein belongs to the UPF0421 family.

It is found in the cell membrane. This is UPF0421 protein SAV1889 from Staphylococcus aureus (strain Mu50 / ATCC 700699).